The primary structure comprises 208 residues: MSQVIYITAHPLDEMVSNSMAVGKAFIESYQESHPDDEVIHIDLFKDEVPEIDADVFSGWGKLQNGETLTEVEQHKVSRLTEIVDQFVSADKYVIATPMWNLSFPPAVKRYFDAVSVAGKSFKYTSEGPQGLLTDKTALHIQSRGGFYSEGPAAEVEMGDRYIRTIFSFLGVPKYKLIAVEGHNKVPERAEEIKLNAIQQAESFAKEF.

FMN contacts are provided by residues 17–19, 99–102, and 143–146; these read SNS, MWNL, and SRGG.

The protein belongs to the azoreductase type 1 family. As to quaternary structure, homodimer. It depends on FMN as a cofactor.

The catalysed reaction is 2 a quinone + NADH + H(+) = 2 a 1,4-benzosemiquinone + NAD(+). The enzyme catalyses N,N-dimethyl-1,4-phenylenediamine + anthranilate + 2 NAD(+) = 2-(4-dimethylaminophenyl)diazenylbenzoate + 2 NADH + 2 H(+). Functionally, quinone reductase that provides resistance to thiol-specific stress caused by electrophilic quinones. Also exhibits azoreductase activity. Catalyzes the reductive cleavage of the azo bond in aromatic azo compounds to the corresponding amines. This chain is FMN-dependent NADH:quinone oxidoreductase, found in Staphylococcus carnosus (strain TM300).